We begin with the raw amino-acid sequence, 201 residues long: Translation initiation factor IF-3 (201 aa).

Residues 170–201 (TPKSASKKGHTPPKTQVEASKQANESAETEEE) are disordered. The segment covering 182-195 (PKTQVEASKQANES) has biased composition (polar residues).

It belongs to the IF-3 family. Monomer.

It is found in the cytoplasm. In terms of biological role, IF-3 binds to the 30S ribosomal subunit and shifts the equilibrium between 70S ribosomes and their 50S and 30S subunits in favor of the free subunits, thus enhancing the availability of 30S subunits on which protein synthesis initiation begins. The polypeptide is Translation initiation factor IF-3 (Porphyromonas gingivalis (strain ATCC BAA-308 / W83)).